A 401-amino-acid polypeptide reads, in one-letter code: Mitochondrial distribution and morphology protein 12 (401 aa).

In terms of domain architecture, SMP-LTD spans 1-401 (MSIDINWDTL…VYPSFWTFLV (401 aa)). The span at 70 to 88 (YEEDEDYPDNEDDDDDEAG) shows a compositional bias: acidic residues. Disordered regions lie at residues 70-95 (YEED…NPRN) and 190-247 (SLTL…EKSP). Positions 195–205 (PQSHPDPSSRP) are enriched in low complexity. Over residues 209 to 220 (HQHDDERRRSLA) the composition is skewed to basic and acidic residues.

This sequence belongs to the MDM12 family. In terms of assembly, component of the ER-mitochondria encounter structure (ERMES) or MDM complex, composed of MMM1, MDM10, MDM12 and MDM34. An MMM1 homodimer associates with one molecule of MDM12 on each side in a pairwise head-to-tail manner, and the SMP-LTD domains of MMM1 and MDM12 generate a continuous hydrophobic tunnel for phospholipid trafficking.

It is found in the mitochondrion outer membrane. It localises to the endoplasmic reticulum membrane. Its function is as follows. Component of the ERMES/MDM complex, which serves as a molecular tether to connect the endoplasmic reticulum (ER) and mitochondria. Components of this complex are involved in the control of mitochondrial shape and protein biogenesis, and function in nonvesicular lipid trafficking between the ER and mitochondria. MDM12 is required for the interaction of the ER-resident membrane protein MMM1 and the outer mitochondrial membrane-resident beta-barrel protein MDM10. The MDM12-MMM1 subcomplex functions in the major beta-barrel assembly pathway that is responsible for biogenesis of all mitochondrial outer membrane beta-barrel proteins, and acts in a late step after the SAM complex. The MDM10-MDM12-MMM1 subcomplex further acts in the TOM40-specific pathway after the action of the MDM12-MMM1 complex. Essential for establishing and maintaining the structure of mitochondria and maintenance of mtDNA nucleoids. The sequence is that of Mitochondrial distribution and morphology protein 12 from Phaeosphaeria nodorum (strain SN15 / ATCC MYA-4574 / FGSC 10173) (Glume blotch fungus).